Consider the following 310-residue polypeptide: Apolipoprotein E (310 aa).

The first 18 residues, 1-18 (MKALWAVLLATLLTGCLS), serve as a signal peptide directing secretion. 8 tandem repeats follow at residues 72–93 (VLME…EQLG), 94–115 (PVAE…ARLG), 116–137 (ADME…TMLG), 138–159 (QSTE…KRLM), 160–181 (RDAE…EGAE), 182–203 (RGVS…QRTA), 204–225 (NLGA…DRLR), and 226–247 (GRLE…EHME). The 8 X 22 AA approximate tandem repeats stretch occupies residues 72 to 247 (VLMEDTMTEV…RLEEMREHME (176 aa)). Residue methionine 135 is modified to Methionine sulfoxide. Residues 150 to 160 (HLRKMRKRLMR) are LDL and other lipoprotein receptors binding. The interval 150–160 (HLRKMRKRLMR) is LDL receptor binding. 154-157 (MRKR) is a heparin binding site. Residues 202 to 282 (TANLGAGVAQ…GWFEPLVEDM (81 aa)) form a lipid-binding and lipoprotein association region. 221–228 (GDRLRGRL) contacts heparin. Positions 258-310 (QQIRLQAEIFQARLKGWFEPLVEDMQRQLANLVEKIQASTNSVLSTSVPQENQ) are homooligomerization. The segment at 270–282 (RLKGWFEPLVEDM) is specificity for association with VLDL.

The protein belongs to the apolipoprotein A1/A4/E family. As to quaternary structure, homotetramer. May interact with ABCA1; functionally associated with ABCA1 in the biogenesis of HDLs. May interact with APP/A4 amyloid-beta peptide; the interaction is extremely stable in vitro but its physiological significance is unclear. May interact with MAPT. May interact with MAP2. In the cerebrospinal fluid, interacts with secreted SORL1. Interacts with PMEL; this allows the loading of PMEL luminal fragment on ILVs to induce fibril nucleation. Post-translationally, APOE exists as multiple glycosylated and sialylated glycoforms within cells and in plasma. The extent of glycosylation and sialylation are tissue and context specific. In terms of processing, glycated in plasma VLDL. Phosphorylated by FAM20C in the extracellular medium.

The protein localises to the secreted. Its subcellular location is the extracellular space. The protein resides in the extracellular matrix. It localises to the extracellular vesicle. It is found in the endosome. The protein localises to the multivesicular body. In terms of biological role, APOE is an apolipoprotein, a protein associating with lipid particles, that mainly functions in lipoprotein-mediated lipid transport between organs via the plasma and interstitial fluids. APOE is a core component of plasma lipoproteins and is involved in their production, conversion and clearance. Apolipoproteins are amphipathic molecules that interact both with lipids of the lipoprotein particle core and the aqueous environment of the plasma. As such, APOE associates with chylomicrons, chylomicron remnants, very low density lipoproteins (VLDL) and intermediate density lipoproteins (IDL) but shows a preferential binding to high-density lipoproteins (HDL). It also binds a wide range of cellular receptors including the LDL receptor/LDLR, the LDL receptor-related proteins LRP1, LRP2 and LRP8 and the very low-density lipoprotein receptor/VLDLR that mediate the cellular uptake of the APOE-containing lipoprotein particles. Finally, APOE also has a heparin-binding activity and binds heparan-sulfate proteoglycans on the surface of cells, a property that supports the capture and the receptor-mediated uptake of APOE-containing lipoproteins by cells. A main function of APOE is to mediate lipoprotein clearance through the uptake of chylomicrons, VLDLs, and HDLs by hepatocytes. APOE is also involved in the biosynthesis by the liver of VLDLs as well as their uptake by peripheral tissues ensuring the delivery of triglycerides and energy storage in muscle, heart and adipose tissues. By participating in the lipoprotein-mediated distribution of lipids among tissues, APOE plays a critical role in plasma and tissues lipid homeostasis. APOE is also involved in two steps of reverse cholesterol transport, the HDLs-mediated transport of cholesterol from peripheral tissues to the liver, and thereby plays an important role in cholesterol homeostasis. First, it is functionally associated with ABCA1 in the biogenesis of HDLs in tissues. Second, it is enriched in circulating HDLs and mediates their uptake by hepatocytes. APOE also plays an important role in lipid transport in the central nervous system, regulating neuron survival and sprouting. In Grammomys surdaster (African woodland thicket rat), this protein is Apolipoprotein E (Apoe).